Reading from the N-terminus, the 350-residue chain is Anthranilate phosphoribosyltransferase (350 aa).

Residues Gly-94, Gly-97–Asp-98, Thr-102, Asn-104–Thr-107, Lys-122–Ser-130, and Ser-134 each bind 5-phospho-alpha-D-ribose 1-diphosphate. Gly-94 provides a ligand contact to anthranilate. Ser-106 provides a ligand contact to Mg(2+). An anthranilate-binding site is contributed by Asn-125. Arg-180 contacts anthranilate. Residues Asp-239 and Glu-240 each contribute to the Mg(2+) site.

The protein belongs to the anthranilate phosphoribosyltransferase family. In terms of assembly, homodimer. It depends on Mg(2+) as a cofactor.

The catalysed reaction is N-(5-phospho-beta-D-ribosyl)anthranilate + diphosphate = 5-phospho-alpha-D-ribose 1-diphosphate + anthranilate. It functions in the pathway amino-acid biosynthesis; L-tryptophan biosynthesis; L-tryptophan from chorismate: step 2/5. Catalyzes the transfer of the phosphoribosyl group of 5-phosphorylribose-1-pyrophosphate (PRPP) to anthranilate to yield N-(5'-phosphoribosyl)-anthranilate (PRA). This is Anthranilate phosphoribosyltransferase from Pelobacter propionicus (strain DSM 2379 / NBRC 103807 / OttBd1).